The sequence spans 222 residues: MANLPILDASGKEVGQYEIDTEQIANRVSKQLLHDVVVMYQANKRQGSHNTRTRGQVSGTNKKMYRQKGTGNARAGSKRTNVRRGGGVARTVKPRDYSYRLPKKAIKIATRMAIRSRIDDGEIVVINELKLDAPKTSQIAQILKNLGLANTTTLIATAGDDQIIYKSGRNISGVTVEPVRQLNALTLLTPKRVLFTQEALDRVKDGTFAGSTQNTNEAEAAA.

Residues 67-87 (QKGTGNARAGSKRTNVRRGGG) form a disordered region.

Belongs to the universal ribosomal protein uL4 family. In terms of assembly, part of the 50S ribosomal subunit.

One of the primary rRNA binding proteins, this protein initially binds near the 5'-end of the 23S rRNA. It is important during the early stages of 50S assembly. It makes multiple contacts with different domains of the 23S rRNA in the assembled 50S subunit and ribosome. Functionally, forms part of the polypeptide exit tunnel. The chain is Large ribosomal subunit protein uL4 from Rhodopirellula baltica (strain DSM 10527 / NCIMB 13988 / SH1).